The primary structure comprises 357 residues: DNA replication and repair protein RecF (357 aa).

30–37 (GANGSGKT) is a binding site for ATP.

The protein belongs to the RecF family.

The protein localises to the cytoplasm. In terms of biological role, the RecF protein is involved in DNA metabolism; it is required for DNA replication and normal SOS inducibility. RecF binds preferentially to single-stranded, linear DNA. It also seems to bind ATP. This Escherichia coli O7:K1 (strain IAI39 / ExPEC) protein is DNA replication and repair protein RecF.